The sequence spans 106 residues: Large ribosomal subunit protein bL21 (106 aa).

This sequence belongs to the bacterial ribosomal protein bL21 family. In terms of assembly, part of the 50S ribosomal subunit. Contacts protein L20.

In terms of biological role, this protein binds to 23S rRNA in the presence of protein L20. This chain is Large ribosomal subunit protein bL21, found in Chlamydia caviae (strain ATCC VR-813 / DSM 19441 / 03DC25 / GPIC) (Chlamydophila caviae).